The following is a 410-amino-acid chain: LL-diaminopimelate aminotransferase (410 aa).

Positions 15 and 42 each coordinate substrate. Pyridoxal 5'-phosphate is bound by residues tyrosine 72, serine 108–lysine 109, tyrosine 132, asparagine 187, tyrosine 218, and serine 246–serine 248. Lysine 109, tyrosine 132, and asparagine 187 together coordinate substrate. N6-(pyridoxal phosphate)lysine is present on lysine 249. Arginine 257 and asparagine 292 together coordinate pyridoxal 5'-phosphate. Substrate is bound by residues asparagine 292 and arginine 388.

It belongs to the class-I pyridoxal-phosphate-dependent aminotransferase family. LL-diaminopimelate aminotransferase subfamily. As to quaternary structure, homodimer. The cofactor is pyridoxal 5'-phosphate.

The catalysed reaction is (2S,6S)-2,6-diaminopimelate + 2-oxoglutarate = (S)-2,3,4,5-tetrahydrodipicolinate + L-glutamate + H2O + H(+). The protein operates within amino-acid biosynthesis; L-lysine biosynthesis via DAP pathway; LL-2,6-diaminopimelate from (S)-tetrahydrodipicolinate (aminotransferase route): step 1/1. Functionally, involved in the synthesis of meso-diaminopimelate (m-DAP or DL-DAP), required for both lysine and peptidoglycan biosynthesis. Catalyzes the direct conversion of tetrahydrodipicolinate to LL-diaminopimelate. This chain is LL-diaminopimelate aminotransferase, found in Geobacter sulfurreducens (strain ATCC 51573 / DSM 12127 / PCA).